The following is a 312-amino-acid chain: Polyamine aminopropyltransferase (312 aa).

One can recognise a PABS domain in the interval 7 to 247; that stretch reads FFWVQEYFTP…GPLGFALAAQ (241 aa). Gln-36 serves as a coordination point for S-methyl-5'-thioadenosine. Residues His-67 and Glu-95 each coordinate spermidine. S-methyl-5'-thioadenosine contacts are provided by residues Asp-115 and 147-148; that span reads DA. Asp-165 serves as the catalytic Proton acceptor. Pro-174 is a binding site for S-methyl-5'-thioadenosine.

The protein belongs to the spermidine/spermine synthase family. Homodimer or homotetramer.

The protein resides in the cytoplasm. It carries out the reaction S-adenosyl 3-(methylsulfanyl)propylamine + putrescine = S-methyl-5'-thioadenosine + spermidine + H(+). The protein operates within amine and polyamine biosynthesis; spermidine biosynthesis; spermidine from putrescine: step 1/1. In terms of biological role, catalyzes the irreversible transfer of a propylamine group from the amino donor S-adenosylmethioninamine (decarboxy-AdoMet) to putrescine (1,4-diaminobutane) to yield spermidine. The polypeptide is Polyamine aminopropyltransferase (Synechococcus sp. (strain JA-2-3B'a(2-13)) (Cyanobacteria bacterium Yellowstone B-Prime)).